A 188-amino-acid polypeptide reads, in one-letter code: COMM domain-containing protein 1 (188 aa).

The tract at residues 1-122 (MAAELEGSKC…CWDRGLRSLS (122 aa)) is sufficient for interaction with SLC12A2. 3 residues coordinate Cu cation: H100, M109, and H133. A COMM domain is found at 117–185 (GLRSLSWRVD…EVEESISTLM (69 aa)). Residues 124 to 188 (RVDGKSQSRH…ESISTLMQPA (65 aa)) are required for binding to PtdIns(4,5)P2.

It belongs to the COMM domain-containing protein 1 family. In terms of assembly, component of the commander complex consisting of the CCC subcomplex and the retriever subcomplex. Component of the CCC (COMMD/CCDC22/CCDC93) subcomplex consisting of COMMD1, COMMD2, COMMD3, COMMD4, COMMD5, COMMD6, COMMD7, COMMD8, COMMD9, COMMD10, CCDC22 and CCDC93; within the complex forms a heterodimer with COMMD6. Interacts with VPS35L; the interaction associates the CCC complex with the retriever complex. Identified in a complex with an E3 ubiquitin ligase complex composed of TCEB1/elongin C, CUL2, SOCS1 and RBX1; in the complex interacts directly with SOCS1 and CUL2. Identified in a complex with NF-kappa-B. Interacts directly with SLC12A2. Interacts directly with ATP7B (via the N-terminal region). Interacts with ATP7A. Interacts with FAM107A; this interaction stabilizes COMMD1 in the nucleus. Interacts with CCS, CDKN2A, RELA, REL, RELB, NFKB1/p105, NFKB2/p100, NFKBIB, SCNN1D, SCNN1B, CFTR, CLU, SGK1, AKT1, CUL1, CUL2, CUL3, CUL4A, CUL4B, CUL5, CUL7, HIF1A. Post-translationally, ubiquitinated; undergoes both 'Lys-63'- and 'Lys-48'-linked polyubiquitination. Ubiquitinated by XIAP, leading to its proteasomal degradation.

The protein resides in the nucleus. It is found in the cytoplasm. It localises to the endosome membrane. Its subcellular location is the cytoplasmic vesicle. The protein localises to the early endosome. The protein resides in the recycling endosome. In terms of biological role, scaffold protein in the commander complex that is essential for endosomal recycling of transmembrane cargos; the commander complex is composed of the CCC subcomplex and the retriever subcomplex. Can modulate activity of cullin-RING E3 ubiquitin ligase (CRL) complexes by displacing CAND1; in vitro promotes CRL E3 activity and dissociates CAND1 from CUL1 and CUL2. Promotes ubiquitination of NF-kappa-B subunit RELA and its subsequent proteasomal degradation. Down-regulates NF-kappa-B activity. Involved in the regulation of membrane expression and ubiquitination of SLC12A2. Modulates Na(+) transport in epithelial cells by regulation of apical cell surface expression of amiloride-sensitive sodium channel (ENaC) subunits and by promoting their ubiquitination presumably involving NEDD4L. Promotes the localization of SCNN1D to recycling endosomes. Promotes CFTR cell surface expression through regulation of its ubiquitination. Down-regulates SOD1 activity by interfering with its homodimerization. Plays a role in copper ion homeostasis. Involved in copper-dependent ATP7A trafficking between the trans-Golgi network and vesicles in the cell periphery; the function is proposed to depend on its association within the CCC complex and cooperation with the WASH complex on early endosomes. Can bind one copper ion per monomer. May function to facilitate biliary copper excretion within hepatocytes. Binds to phosphatidylinositol 4,5-bisphosphate (PtdIns(4,5)P2). Involved in the regulation of HIF1A-mediated transcription; competes with ARNT/Hif-1-beta for binding to HIF1A resulting in decreased DNA binding and impaired transcriptional activation by HIF-1. Negatively regulates neuroblastoma G1/S phase cell cycle progression and cell proliferation by stimulating ubiquitination of NF-kappa-B subunit RELA and NF-kappa-B degradation in a FAM107A- and actin-dependent manner. The chain is COMM domain-containing protein 1 (COMMD1) from Bos taurus (Bovine).